Here is a 553-residue protein sequence, read N- to C-terminus: Mucolipin-3 (553 aa).

At Met1–Lys62 the chain is on the cytoplasmic side. An interaction with phosphoinositides region spans residues Lys52–Lys62. The chain crosses the membrane as a helical span at residues Leu63–Ser83. The Extracellular portion of the chain corresponds to Asn84 to His283. The extracellular/lumenal pore loop stretch occupies residues Lys104–Thr118. An N-linked (GlcNAc...) asparagine glycan is attached at Asn138. Cys159 and Cys185 form a disulfide bridge. Asn205 carries an N-linked (GlcNAc...) asparagine glycan. A disulfide bond links Cys238 and Cys269. A helical transmembrane segment spans residues Asn284–Ile304. At Arg305–Trp341 the chain is on the cytoplasmic side. A helical membrane pass occupies residues Tyr342 to Ile362. At Gln363–Asp371 the chain is on the extracellular side. A helical membrane pass occupies residues Val372–Leu392. The Cytoplasmic portion of the chain corresponds to Gly393 to Arg414. The helical transmembrane segment at Phe415 to Gly435 threads the bilayer. Topologically, residues Pro436–Ser443 are extracellular. Residues Leu444–Phe464 constitute an intramembrane region (pore-forming). The Selectivity filter motif lies at Asn456–Asp459. Residues Ala465 to Trp475 lie on the Extracellular side of the membrane. Residues Leu476–Phe497 traverse the membrane as a helical segment. Over Ile498–Lys553 the chain is Cytoplasmic.

It belongs to the transient receptor (TC 1.A.4) family. Polycystin subfamily. MCOLN3 sub-subfamily. Homotetramer. Can heterooligomerize with MCOLN1; heteromeric assemblies have different channel properties as compared to the respective homooligomers and may be tissue-specific. May heterooligomerize with TRPV5 to form a functional distinct ion channel. Interacts with GABARAPL2. N-glycosylated.

The protein localises to the lysosome membrane. Its subcellular location is the early endosome membrane. It is found in the late endosome membrane. It localises to the cytoplasmic vesicle. The protein resides in the autophagosome membrane. The protein localises to the cell projection. Its subcellular location is the stereocilium membrane. It carries out the reaction Ca(2+)(in) = Ca(2+)(out). The catalysed reaction is Mg(2+)(in) = Mg(2+)(out). The enzyme catalyses K(+)(in) = K(+)(out). It catalyses the reaction Na(+)(in) = Na(+)(out). Channel activity is activated by PtdIns(3,5)P2 (phosphatidylinositol 3,5-bisphosphate). Inhibited by lumenal H(+) and Na(+). The channel pore shows dynamic behavior and undergoes spontaneous, Ca(2+)-dependent modulation when conducting Ca(2+). In terms of biological role, nonselective cation channel probably playing a role in the regulation of membrane trafficking events. Acts as a Ca(2+)-permeable cation channel with inwardly rectifying activity. Mediates release of Ca(2+) from endosomes to the cytoplasm, contributes to endosomal acidification and is involved in the regulation of membrane trafficking and fusion in the endosomal pathway. Also permeable to Mg(2+), Na(+) and K(+). Does not seem to act as mechanosensory transduction channel in inner ear sensory hair cells. Proposed to play a critical role at the cochlear stereocilia ankle-link region during hair-bundle growth. Involved in the regulation of autophagy. Through association with GABARAPL2 may be involved in autophagosome formation possibly providing Ca(2+) for the fusion process. Through a possible and probably tissue-specific heteromerization with MCOLN1 may be at least in part involved in many lysosome-dependent cellular events. Possible heteromeric ion channel assemblies with TRPV5 show pharmacological similarity with TRPML3. In Callithrix jacchus (White-tufted-ear marmoset), this protein is Mucolipin-3.